The chain runs to 275 residues: 2,3,4,5-tetrahydropyridine-2,6-dicarboxylate N-succinyltransferase (275 aa).

Substrate is bound by residues Arg-104 and Asp-141.

This sequence belongs to the transferase hexapeptide repeat family. As to quaternary structure, homotrimer.

The protein localises to the cytoplasm. The enzyme catalyses (S)-2,3,4,5-tetrahydrodipicolinate + succinyl-CoA + H2O = (S)-2-succinylamino-6-oxoheptanedioate + CoA. The protein operates within amino-acid biosynthesis; L-lysine biosynthesis via DAP pathway; LL-2,6-diaminopimelate from (S)-tetrahydrodipicolinate (succinylase route): step 1/3. The polypeptide is 2,3,4,5-tetrahydropyridine-2,6-dicarboxylate N-succinyltransferase (Aeromonas hydrophila subsp. hydrophila (strain ATCC 7966 / DSM 30187 / BCRC 13018 / CCUG 14551 / JCM 1027 / KCTC 2358 / NCIMB 9240 / NCTC 8049)).